Here is a 407-residue protein sequence, read N- to C-terminus: UDP-N-acetyl-D-mannosamine dehydrogenase (407 aa).

Belongs to the UDP-glucose/GDP-mannose dehydrogenase family.

The catalysed reaction is UDP-N-acetyl-alpha-D-mannosamine + 2 NAD(+) + H2O = UDP-N-acetyl-alpha-D-mannosaminouronate + 2 NADH + 3 H(+). The protein operates within capsule biogenesis; capsule polysaccharide biosynthesis. Dehydrogenase involved in the biosynthesis of capsular polysaccharides. Catalyzes the NAD(+)-dependent oxidation of UDP-N-acetyl-D-mannosamine (UDP-ManNAc) to UDP-N-acetyl-D-mannosaminuronic acid (UDP-ManNAcA). The protein is UDP-N-acetyl-D-mannosamine dehydrogenase of Campylobacter jejuni.